The chain runs to 489 residues: Probable apyrase 1 (489 aa).

Residues 1 to 28 (MRRFSAAAGARQQQQQGEAVSDRVLRFR) are Cytoplasmic-facing. A helical; Signal-anchor for type II membrane protein transmembrane segment spans residues 29–49 (GVLVVVLAPVLLISLVLLLMP). Residues 50-489 (RAPASATVEG…GSAIEVASSS (440 aa)) are Extracellular-facing. An ATP-binding site is contributed by 89–99 (VIFDAGSSGSR). Catalysis depends on Glu211, which acts as the Proton acceptor. An ATP-binding site is contributed by 235 to 245 (GVVDLGGGSVQ).

Belongs to the GDA1/CD39 NTPase family. Ca(2+) serves as cofactor.

The protein localises to the membrane. The catalysed reaction is a ribonucleoside 5'-triphosphate + 2 H2O = a ribonucleoside 5'-phosphate + 2 phosphate + 2 H(+). Catalyzes the hydrolysis of phosphoanhydride bonds of nucleoside tri- and di-phosphates. The polypeptide is Probable apyrase 1 (APY1) (Oryza sativa subsp. japonica (Rice)).